The primary structure comprises 147 residues: uncharacterized protein (147 aa).

Positions 72–81 are enriched in low complexity; sequence ARAKPASRAP. A disordered region spans residues 72–147; the sequence is ARAKPASRAP…QGAAGRRLSP (76 aa).

This is an uncharacterized protein from Homo sapiens (Human).